We begin with the raw amino-acid sequence, 674 residues long: ATP-dependent DNA helicase Hel308 (674 aa).

Residues Q27 and 44–51 (VPTAAGKT) each bind ATP. Residues 31–197 (IEQIRKGRNV…WLDASLIKSD (167 aa)) enclose the Helicase ATP-binding domain. Positions 142–145 (DEIH) match the DEAH box motif. Residues 224 to 411 (SINQIIRETV…EAKVRFNTLA (188 aa)) enclose the Helicase C-terminal domain.

This sequence belongs to the helicase family. Hel308 subfamily. As to quaternary structure, monomer.

The enzyme catalyses Couples ATP hydrolysis with the unwinding of duplex DNA by translocating in the 3'-5' direction.. It carries out the reaction ATP + H2O = ADP + phosphate + H(+). Functionally, DNA-dependent ATPase and 3'-5' DNA helicase that may be involved in repair of stalled replication forks. The sequence is that of ATP-dependent DNA helicase Hel308 from Thermoplasma acidophilum (strain ATCC 25905 / DSM 1728 / JCM 9062 / NBRC 15155 / AMRC-C165).